Consider the following 288-residue polypeptide: Probable endonuclease 4 (288 aa).

Residues H75, H115, E153, D187, H190, H224, D237, H239, and E269 each contribute to the Zn(2+) site.

Belongs to the AP endonuclease 2 family. Zn(2+) serves as cofactor.

It carries out the reaction Endonucleolytic cleavage to 5'-phosphooligonucleotide end-products.. Functionally, endonuclease IV plays a role in DNA repair. It cleaves phosphodiester bonds at apurinic or apyrimidinic (AP) sites, generating a 3'-hydroxyl group and a 5'-terminal sugar phosphate. This is Probable endonuclease 4 from Chlamydia trachomatis serovar A (strain ATCC VR-571B / DSM 19440 / HAR-13).